The following is a 325-amino-acid chain: UPF0285 protein Mbar_A0208 (325 aa).

Belongs to the UPF0285 family.

In Methanosarcina barkeri (strain Fusaro / DSM 804), this protein is UPF0285 protein Mbar_A0208.